We begin with the raw amino-acid sequence, 517 residues long: Crotonobetaine/carnitine--CoA ligase (517 aa).

This sequence belongs to the ATP-dependent AMP-binding enzyme family.

It carries out the reaction 4-(trimethylamino)butanoate + ATP + CoA = 4-(trimethylamino)butanoyl-CoA + AMP + diphosphate. The catalysed reaction is crotonobetaine + ATP + CoA = crotonobetainyl-CoA + AMP + diphosphate. It catalyses the reaction (R)-carnitine + ATP + CoA = (R)-carnitinyl-CoA + AMP + diphosphate. The protein operates within amine and polyamine metabolism; carnitine metabolism. Functionally, catalyzes the transfer of CoA to carnitine, generating the initial carnitinyl-CoA needed for the CaiB reaction cycle. Also has activity toward crotonobetaine and gamma-butyrobetaine. This is Crotonobetaine/carnitine--CoA ligase from Shigella dysenteriae serotype 1 (strain Sd197).